Consider the following 70-residue polypeptide: Sporulation protein YhaL (70 aa).

The helical transmembrane segment at 3 to 23 threads the bilayer; it reads FFPWWVYLCIVGIIFSAYKLV. The tract at residues 48–70 is disordered; that stretch reads MEKERERRSSQQHEEENQNHSIA.

Its subcellular location is the cell membrane. Its function is as follows. Required for efficient sporulation. The polypeptide is Sporulation protein YhaL (yhaL) (Bacillus subtilis (strain 168)).